Here is a 480-residue protein sequence, read N- to C-terminus: Zinc metalloproteinase/disintegrin (480 aa).

The signal sequence occupies residues 1–20; it reads MIQVLLITICLAVFPFQGSS. Residues 21–190 constitute a propeptide that is removed on maturation; it reads IVLDSGNLNE…KASQLNVSPD (170 aa). One can recognise a Peptidase M12B domain in the interval 197–391; that stretch reads RFIKLAIYVD…HSPQCILNDP (195 aa). Asn-259 and Asn-279 each carry an N-linked (GlcNAc...) asparagine glycan. 9 cysteine pairs are disulfide-bonded: Cys-308/Cys-386, Cys-348/Cys-370, Cys-350/Cys-353, Cys-413/Cys-428, Cys-415/Cys-423, Cys-422/Cys-445, Cys-436/Cys-442, Cys-441/Cys-466, and Cys-454/Cys-473. His-333 contributes to the Zn(2+) binding site. Residue Glu-334 is part of the active site. The Zn(2+) site is built by His-337 and His-343. The region spanning 399–480 is the Disintegrin domain; the sequence is TPVSGNELLE…AGCPRNPFHA (82 aa). A Cell attachment site motif is present at residues 458–460; sequence RGD.

This sequence belongs to the venom metalloproteinase (M12B) family. P-II subfamily. P-IIa sub-subfamily. As to quaternary structure, monomer. Requires Zn(2+) as cofactor. Expressed by the venom gland.

It is found in the secreted. Functionally, impairs hemostasis in the envenomed animal. In terms of biological role, inhibits platelet aggregation and bone resorption. This is Zinc metalloproteinase/disintegrin from Gloydius halys (Chinese water mocassin).